A 161-amino-acid chain; its full sequence is Nucleotide-binding protein Bcenmc03_2579 (161 aa).

It belongs to the YajQ family.

Functionally, nucleotide-binding protein. The chain is Nucleotide-binding protein Bcenmc03_2579 from Burkholderia orbicola (strain MC0-3).